The chain runs to 443 residues: UPF0597 protein DVU_0440 (443 aa).

This sequence belongs to the UPF0597 family.

This Nitratidesulfovibrio vulgaris (strain ATCC 29579 / DSM 644 / CCUG 34227 / NCIMB 8303 / VKM B-1760 / Hildenborough) (Desulfovibrio vulgaris) protein is UPF0597 protein DVU_0440.